The chain runs to 261 residues: MLHIADTILTSRLLTGTGKFATPELMLAALEASGSQLVTMAMKRVDLNGGNDAILAPLRQLGIKLLPNTSGAKTADEAVFAARLAREALGTHWLKLEIHPDVKYLLPDPIETLKAAEQLVKEGFTVLPYCGADPVLCKRLEEVGCAAVMPLGAPIGSNQGLQTRDFLRIIIEQARIPVIVDAGIGAPSHAADALEMGADGVLVNTAIAVARDPVAMARAFRLAVNAGGLARQAGQGNKQFVASATSPLTGFLHQQTEGAER.

Lys-95 functions as the Schiff-base intermediate with DXP in the catalytic mechanism. Residues Gly-156, 182 to 183, and 204 to 205 each bind 1-deoxy-D-xylulose 5-phosphate; these read AG and NT.

Belongs to the ThiG family. In terms of assembly, homotetramer. Forms heterodimers with either ThiH or ThiS.

The protein localises to the cytoplasm. It catalyses the reaction [ThiS sulfur-carrier protein]-C-terminal-Gly-aminoethanethioate + 2-iminoacetate + 1-deoxy-D-xylulose 5-phosphate = [ThiS sulfur-carrier protein]-C-terminal Gly-Gly + 2-[(2R,5Z)-2-carboxy-4-methylthiazol-5(2H)-ylidene]ethyl phosphate + 2 H2O + H(+). The protein operates within cofactor biosynthesis; thiamine diphosphate biosynthesis. Functionally, catalyzes the rearrangement of 1-deoxy-D-xylulose 5-phosphate (DXP) to produce the thiazole phosphate moiety of thiamine. Sulfur is provided by the thiocarboxylate moiety of the carrier protein ThiS. In vitro, sulfur can be provided by H(2)S. In Pectobacterium atrosepticum (strain SCRI 1043 / ATCC BAA-672) (Erwinia carotovora subsp. atroseptica), this protein is Thiazole synthase.